The chain runs to 722 residues: Serine/threonine-protein kinase MARK2 (722 aa).

The disordered stretch occupies residues 1 to 46 (MSSARTPLPTLNERDTEQPTLGHLDSKPSSKSNMLRGRNSATSADE). Over residues 27-45 (KPSSKSNMLRGRNSATSAD) the composition is skewed to polar residues. Residue Ser40 is modified to Phosphoserine. Positions 53-304 (YRLLKTIGKG…LEQIMKDRWM (252 aa)) constitute a Protein kinase domain. Thr58 carries the phosphothreonine; by autocatalysis modification. Residues 59-67 (IGKGNFAKV) and Lys82 contribute to the ATP site. Phosphoserine; by CaMK1 occurs at positions 91, 92, and 93. Asp175 functions as the Proton acceptor in the catalytic mechanism. Thr208 bears the Phosphothreonine; by LKB1 and TAOK1 mark. At Ser212 the chain carries Phosphoserine; by GSK3-beta. Ser274 is subject to Phosphoserine; by autocatalysis. Thr275 is modified (phosphothreonine; by autocatalysis). At Thr294 the chain carries Phosphothreonine; by CaMK1. In terms of domain architecture, UBA spans 323–362 (YKDPRRTELMVSMGYTREEIQDSLVGQRYNEVMATYLLLG). Residues 373–576 (ITLKPRPSAD…SQGRRGASGS (204 aa)) form a disordered region. A phosphoserine mark is found at Ser408 and Ser409. The span at 417–431 (PTSNSYSKKTQSNNA) shows a compositional bias: polar residues. The segment covering 432–442 (ENKRPEEETGR) has biased composition (basic and acidic residues). Ser453 is modified (phosphoserine). Phosphothreonine is present on Thr464. Polar residues predominate over residues 464 to 483 (TPTPSTNSVLSTSTNRSRNS). 2 positions are modified to phosphoserine: Ser483 and Ser490. Polar residues predominate over residues 492–505 (GQASIQNGKDSTAP). The span at 511–524 (ASPSAHNISSSSGA) shows a compositional bias: low complexity. 3 positions are modified to phosphoserine: Ser512, Ser514, and Ser535. A Phosphothreonine; by PKC/PRKCZ modification is found at Thr539. A phosphoserine mark is found at Ser562 and Ser656. The KA1 domain occupies 673-722 (TPGHENFVQWEMEVCKLPRLSLNGVRFKRISGTSMAFKNIASKIANELKL).

Belongs to the protein kinase superfamily. CAMK Ser/Thr protein kinase family. SNF1 subfamily. In terms of assembly, homodimer. Interacts (when phosphorylated at Thr-539) with YWHAZ. Interacts with MTCL1; the interaction is direct and increases MARK2 microtubule-binding ability. Interacts with PAK5; leading to inhibit the protein kinase activity. Interacts with MAPT/TAU. Interacts with YWHAB, YWHAG and YWHAQ. Requires Mg(2+) as cofactor. In terms of processing, autophosphorylated. Phosphorylated at Thr-208 by STK11/LKB1 in complex with STE20-related adapter-alpha (STRADA) pseudo kinase and CAB39. Phosphorylation at Thr-208 by TAOK1 activates the kinase activity, leading to phosphorylation and detachment of MAPT/TAU from microtubules. Phosphorylation at Ser-212 by GSK3-beta (GSK3B) inhibits the kinase activity. Phosphorylation by CaMK1 promotes activity and is required to promote neurite outgrowth. Phosphorylation at Thr-539 by PRKCZ/aPKC in polarized epithelial cells inhibits the kinase activity and promotes binding to 14-3-3 protein YWHAZ, leading to relocation from cell membrane to cytoplasm.

The protein resides in the cell membrane. It is found in the lateral cell membrane. The protein localises to the cytoplasm. Its subcellular location is the cytoskeleton. It localises to the cell projection. The protein resides in the dendrite. The catalysed reaction is L-seryl-[protein] + ATP = O-phospho-L-seryl-[protein] + ADP + H(+). The enzyme catalyses L-threonyl-[protein] + ATP = O-phospho-L-threonyl-[protein] + ADP + H(+). It carries out the reaction L-seryl-[tau protein] + ATP = O-phospho-L-seryl-[tau protein] + ADP + H(+). It catalyses the reaction L-threonyl-[tau protein] + ATP = O-phospho-L-threonyl-[tau protein] + ADP + H(+). With respect to regulation, inhibited by hymenialdisine. Activated by phosphorylation on Thr-208 by STK11/LKB1 and TAOK1. Inhibited by phosphorylation at Ser-212 or Thr-539. Inhibited by PAK5; inhibition is independent of the kinase activity of PAK5. Serine/threonine-protein kinase. Involved in cell polarity and microtubule dynamics regulation. Phosphorylates CRTC2/TORC2, DCX, HDAC7, KIF13B, MAP2, MAP4 and RAB11FIP2. Phosphorylates the microtubule-associated protein MAPT/TAU. Plays a key role in cell polarity by phosphorylating the microtubule-associated proteins MAP2, MAP4 and MAPT/TAU at KXGS motifs, causing detachment from microtubules, and their disassembly. Regulates epithelial cell polarity by phosphorylating RAB11FIP2. Involved in the regulation of neuronal migration through its dual activities in regulating cellular polarity and microtubule dynamics, possibly by phosphorylating and regulating DCX. Regulates axogenesis by phosphorylating KIF13B, promoting interaction between KIF13B and 14-3-3 and inhibiting microtubule-dependent accumulation of KIF13B. Also required for neurite outgrowth and establishment of neuronal polarity. Regulates localization and activity of some histone deacetylases by mediating phosphorylation of HDAC7, promoting subsequent interaction between HDAC7 and 14-3-3 and export from the nucleus. Also acts as a positive regulator of the Wnt signaling pathway, probably by mediating phosphorylation of dishevelled proteins (DVL1, DVL2 and/or DVL3). Modulates the developmental decision to build a columnar versus a hepatic epithelial cell apparently by promoting a switch from a direct to a transcytotic mode of apical protein delivery. Essential for the asymmetric development of membrane domains of polarized epithelial cells. In Rattus norvegicus (Rat), this protein is Serine/threonine-protein kinase MARK2.